The chain runs to 388 residues: Chorismate synthase (388 aa).

NADP(+) contacts are provided by R39 and R45. FMN is bound by residues 130–132, 251–252, G296, 311–315, and R337; these read RSS, NA, and KPIPT.

It belongs to the chorismate synthase family. In terms of assembly, homotetramer. The cofactor is FMNH2.

The enzyme catalyses 5-O-(1-carboxyvinyl)-3-phosphoshikimate = chorismate + phosphate. It participates in metabolic intermediate biosynthesis; chorismate biosynthesis; chorismate from D-erythrose 4-phosphate and phosphoenolpyruvate: step 7/7. Its function is as follows. Catalyzes the anti-1,4-elimination of the C-3 phosphate and the C-6 proR hydrogen from 5-enolpyruvylshikimate-3-phosphate (EPSP) to yield chorismate, which is the branch point compound that serves as the starting substrate for the three terminal pathways of aromatic amino acid biosynthesis. This reaction introduces a second double bond into the aromatic ring system. The chain is Chorismate synthase from Streptococcus agalactiae serotype III (strain NEM316).